Reading from the N-terminus, the 62-residue chain is Bacteriocin lactacin-F subunit LafX (62 aa).

The propeptide occupies 1–14; the sequence is MKLNDKELSKIVGG.

Belongs to the bacteriocin class IIB family. As to quaternary structure, this bacteriocin depends upon the complementation of two peptides for activity: LafA and LafX. Associated with a 180 kDa bacteriocin complex.

In terms of biological role, heat stable bacteriocin active against Enterococcus faecalis and other Lactobacilli. The protein is Bacteriocin lactacin-F subunit LafX (lafX) of Lactobacillus johnsonii (strain CNCM I-12250 / La1 / NCC 533).